Here is a 181-residue protein sequence, read N- to C-terminus: ATP synthase subunit delta (181 aa).

It belongs to the ATPase delta chain family. F-type ATPases have 2 components, F(1) - the catalytic core - and F(0) - the membrane proton channel. F(1) has five subunits: alpha(3), beta(3), gamma(1), delta(1), epsilon(1). F(0) has three main subunits: a(1), b(2) and c(10-14). The alpha and beta chains form an alternating ring which encloses part of the gamma chain. F(1) is attached to F(0) by a central stalk formed by the gamma and epsilon chains, while a peripheral stalk is formed by the delta and b chains.

The protein localises to the cell membrane. In terms of biological role, f(1)F(0) ATP synthase produces ATP from ADP in the presence of a proton or sodium gradient. F-type ATPases consist of two structural domains, F(1) containing the extramembraneous catalytic core and F(0) containing the membrane proton channel, linked together by a central stalk and a peripheral stalk. During catalysis, ATP synthesis in the catalytic domain of F(1) is coupled via a rotary mechanism of the central stalk subunits to proton translocation. Functionally, this protein is part of the stalk that links CF(0) to CF(1). It either transmits conformational changes from CF(0) to CF(1) or is implicated in proton conduction. The protein is ATP synthase subunit delta of Lacticaseibacillus paracasei (strain ATCC 334 / BCRC 17002 / CCUG 31169 / CIP 107868 / KCTC 3260 / NRRL B-441) (Lactobacillus paracasei).